Reading from the N-terminus, the 182-residue chain is WUSCHEL-related homeobox 5 (182 aa).

The disordered stretch occupies residues Met1 to Arg24. The homeobox; WUS-type DNA-binding region spans Thr20–Arg84.

It belongs to the WUS homeobox family. As to expression, specifically expressed in the central cells of a quiescent center (QC) of the root.

The protein resides in the nucleus. Transcription factor, which may be involved in the specification and maintenance of the stem cells (QC cells) in the root apical meristem (RAM). In Arabidopsis thaliana (Mouse-ear cress), this protein is WUSCHEL-related homeobox 5 (WOX5).